An 891-amino-acid chain; its full sequence is Targeting protein for Xklp2 homolog (891 aa).

Basic and acidic residues predominate over residues 42–54 (HENGVPLTFDDKA). Disordered stretches follow at residues 42–310 (HENG…KSCP), 418–454 (NLRK…SFSG), 472–518 (HTKT…NRHR), 723–746 (CSGV…AEKG), and 789–891 (STKP…SHTS). Residues 108–124 (DDVSSAESETCEMSTDS) are compositionally biased toward polar residues. Positions 141–154 (DDEATVQESSDAEE) are enriched in acidic residues. The segment covering 155–173 (TQTLPSSCVDSSTAEMSTD) has biased composition (polar residues). The span at 236 to 246 (PTRKSPRLHSR) shows a compositional bias: basic residues. Residues 442–454 (DNRKRTHEESFSG) show a composition bias toward basic and acidic residues. Positions 791-802 (KPMTDISNFSLN) are enriched in polar residues. Basic and acidic residues-rich tracts occupy residues 803 to 822 (TERR…ERQL) and 831 to 852 (REAE…DSIH).

It belongs to the TPX2 family. Detectable in immature oocytes.

The protein resides in the nucleus. The protein localises to the cytoplasm. Its subcellular location is the cytoskeleton. It localises to the spindle. In terms of biological role, spindle assembly factor. Required for normal assembly of mitotic spindles. This is Targeting protein for Xklp2 homolog from Patiria pectinifera (Starfish).